We begin with the raw amino-acid sequence, 424 residues long: Inositol phosphosphingolipids phospholipase C (424 aa).

E49 is a binding site for Mg(2+). The active-site Proton acceptor is the H289. Transmembrane regions (helical) follow at residues 335 to 357 (LRIA…IAWC) and 364 to 386 (VIIL…CIGL).

It belongs to the neutral sphingomyelinase family. The cofactor is Mg(2+).

The protein resides in the cell membrane. It localises to the endoplasmic reticulum membrane. It participates in lipid metabolism; sphingolipid metabolism. In terms of biological role, inositol phosphosphingolipids phospholipase essential for the coordination of cell wall formation. Responsible for the hydrolysis of the phosphosphingolipids (IPS), inositol phosphorylceramide (IPC), mannosylinositol phosphorylceramide (MIPC), and mannosyldiinositol phosphorylceramide (M(IP)2C). This is Inositol phosphosphingolipids phospholipase C (css1) from Schizosaccharomyces pombe (strain 972 / ATCC 24843) (Fission yeast).